The primary structure comprises 1335 residues: Regulatory-associated protein of mTOR (1335 aa).

Phosphoserine occurs at positions 44 and 122. Residue Ser-696 is modified to Phosphoserine; by MAPK8. Thr-700 carries O-linked (GlcNAc) threonine glycosylation. Thr-706 carries the phosphothreonine; by MAPK8 modification. Ser-719 and Ser-721 each carry phosphoserine; by RPS6KA1. The residue at position 722 (Ser-722) is a Phosphoserine; by AMPK and RPS6KA1. Residue Ser-738 is modified to Phosphoserine. At Ser-791 the chain carries Phosphoserine; by PKA. Residue Ser-792 is modified to Phosphoserine; by AMPK. Phosphoserine is present on residues Ser-836 and Ser-855. Residues 850 to 943 (VLDTSSLTQS…PEQTADDADD (94 aa)) are disordered. Polar residues predominate over residues 851-866 (LDTSSLTQSAPASPTN). Ser-859 is modified (phosphoserine; by MTOR). Phosphoserine; by MAPK8, MTOR and NLK is present on Ser-863. Residue Thr-865 is modified to Phosphothreonine. Over residues 874–887 (AGGSPPASSTSSSS) the composition is skewed to low complexity. Ser-877 bears the Phosphoserine; by TBK1 mark. Residues Lys-932 and Lys-948 each participate in a glycyl lysine isopeptide (Lys-Gly) (interchain with G-Cter in ubiquitin) cross-link. At Ser-982 the chain carries Phosphoserine. WD repeat units lie at residues 1020–1061 (NRNP…DYFH), 1065–1106 (PRYT…EKNP), 1121–1160 (TTRG…KVQD), 1164–1203 (GADS…SECR), 1209–1249 (EHTA…SVNV), 1251–1291 (QIVK…NNIK), and 1299–1335 (QRVG…KRVR). Lys-1097 carries the post-translational modification N6-acetyllysine.

This sequence belongs to the WD repeat RAPTOR family. As to quaternary structure, part of the mechanistic target of rapamycin complex 1 (mTORC1) which contains MTOR, MLST8 and RPTOR. mTORC1 associates with AKT1S1/PRAS40, which inhibits its activity. mTORC1 associates with DEPTOR, which regulates its activity. mTORC1 binds to and is inhibited by FKBP12-rapamycin. Forms a complex with MTOR under both leucine-rich and -poor conditions. Interacts with (via TOS motifs) EIF4EBP1 and RPS6KB1; interaction is independent of its association with MTOR. Binds preferentially to poorly or non-phosphorylated forms of EIF4EBP1, and this binding is critical to the ability of MTOR to catalyze phosphorylation. Interacts with ULK1 in a nutrient-dependent manner; the interaction is reduced during starvation. Interacts with GTP-bound form of RagA/RRAGA or RagB/RRAGB and GDP-bound form of RagC/RRAGC or RagD/RRAGD, promoting recruitment of mTORC1 to the lysosomes. Interacts (when phosphorylated by AMPK) with 14-3-3 protein, leading to inhibition of its activity. Interacts with SPAG5; SPAG5 competes with MTOR for RPTOR-binding, resulting in decreased mTORC1 formation. Interacts with WAC; WAC positively regulates MTOR activity by promoting the assembly of the TTT complex composed of TELO2, TTI1 and TTI2 and the RUVBL complex composed of RUVBL1 and RUVBL2 into the TTT-RUVBL complex which leads to the dimerization of the mTORC1 complex and its subsequent activation. Interacts with G3BP1. The complex formed with G3BP1 and SPAG5 is increased by oxidative stress. Interacts with HTR6. Interacts with PIH1D1. Interacts with LARP1. Interacts with BRAT1. Interacts with SIK3. Interacts with SLC38A7; this interaction mediates the recruitment of mTORC1 to the lysosome and its subsequent activation. (Microbial infection) Interacts with vaccinia virus protein F17; this interaction dysregulates mTOR. In terms of processing, insulin-stimulated phosphorylation at Ser-863 by MTOR and MAPK8 regulates mTORC1 activity. Phosphorylated at Ser-863 by NLK in response to stress, disrupting the interaction with small GTPases Rag (RagA/RRAGA, RagB/RRAGB, RagC/RRAGC and/or RagD/RRAGD), thereby preventing lysosome recruitment and activation of the mTORC1 complex. Osmotic stress also induces phosphorylation at Ser-696, Thr-706 and Ser-863 by MAPK8. Ser-863 phosphorylation is required for phosphorylation at Ser-855 and Ser-859. In response to nutrient limitation, phosphorylated at Ser-722 and Ser-792 by AMPK; phosphorylation promotes interaction with 14-3-3 proteins, leading to negative regulation of the mTORC1 complex. Phosphorylation at Ser-722 and Ser-792 by AMPK in response to glucose starvation inhibits O-GlcNAcylation by OGT and subsequent activation of mTORC1. In response to growth factors, phosphorylated at Ser-719, Ser-721 and Ser-722 by RPS6KA1, which stimulates mTORC1 activity. Phosphorylation at Ser-791 by PKA downstream of cAMP inhibits the mTORC1 complex. Phosphorylated at Ser-877 by TBK1, leading to negative regulation of the mTORC1 complex. Post-translationally, O-GlcNAcylated by OGT upon glucose sufficiency, promoting interaction with small GTPases Rag (RagA/RRAGA, RagB/RRAGB, RagC/RRAGC and/or RagD/RRAGD) and subsequent recruitment of mTORC1 to lysosomal membranes, leading to activation of the mTORC1 complex. Phosphorylation at Ser-722 and Ser-792 by AMPK in response to glucose starvation inhibits O-GlcNAcylation. Acetylation at Lys-1097 by EP300/p300 in response to leucine metabolite acetyl-coA promotes its activity, leading to activation of the mTORC1 complex. Acetylation is decreased in response to fasting. In terms of processing, ubiquitinated, leading to its degradation by the proteasome. Deubiquitinated by OTUB1 via a non-catalytic mechanism. Ubiquitinated by an E3 ubiquitin ligase complex containing VHL. As to expression, highly expressed in skeletal muscle, and in a lesser extent in brain, lung, small intestine, kidney and placenta. In terms of tissue distribution, widely expressed, with highest levels in nasal mucosa and pituitary and lowest in spleen.

The protein localises to the lysosome membrane. The protein resides in the cytoplasm. It localises to the cytoplasmic granule. In terms of biological role, component of the mechanistic target of rapamycin complex 1 (mTORC1), an evolutionarily conserved central nutrient sensor that stimulates anabolic reactions and macromolecule biosynthesis to promote cellular biomass generation and growth. In response to nutrients, growth factors or amino acids, mTORC1 is recruited to the lysosome membrane and promotes protein, lipid and nucleotide synthesis by phosphorylating several substrates, such as ribosomal protein S6 kinase (RPS6KB1 and RPS6KB2) and EIF4EBP1 (4E-BP1). In the same time, it inhibits catabolic pathways by phosphorylating the autophagy initiation components ULK1 and ATG13, as well as transcription factor TFEB, a master regulators of lysosomal biogenesis and autophagy. The mTORC1 complex is inhibited in response to starvation and amino acid depletion. Within the mTORC1 complex, RPTOR acts both as a molecular adapter, which (1) mediates recruitment of mTORC1 to lysosomal membranes via interaction with small GTPases Rag (RagA/RRAGA, RagB/RRAGB, RagC/RRAGC and/or RagD/RRAGD), and a (2) substrate-specific adapter, which promotes substrate specificity by binding to TOS motif-containing proteins and direct them towards the active site of the MTOR kinase domain for phosphorylation. mTORC1 complex regulates many cellular processes, such as odontoblast and osteoclast differentiation or neuronal transmission. mTORC1 complex in excitatory neuronal transmission is required for the prosocial behavior induced by the psychoactive substance lysergic acid diethylamide (LSD). The protein is Regulatory-associated protein of mTOR of Homo sapiens (Human).